A 94-amino-acid chain; its full sequence is Putative septation protein SpoVG (94 aa).

The protein belongs to the SpoVG family.

In terms of biological role, could be involved in septation. In Acholeplasma laidlawii (strain PG-8A), this protein is Putative septation protein SpoVG.